A 242-amino-acid chain; its full sequence is Leucyl/phenylalanyl-tRNA--protein transferase (242 aa).

Belongs to the L/F-transferase family.

The protein localises to the cytoplasm. It catalyses the reaction N-terminal L-lysyl-[protein] + L-leucyl-tRNA(Leu) = N-terminal L-leucyl-L-lysyl-[protein] + tRNA(Leu) + H(+). The enzyme catalyses N-terminal L-arginyl-[protein] + L-leucyl-tRNA(Leu) = N-terminal L-leucyl-L-arginyl-[protein] + tRNA(Leu) + H(+). The catalysed reaction is L-phenylalanyl-tRNA(Phe) + an N-terminal L-alpha-aminoacyl-[protein] = an N-terminal L-phenylalanyl-L-alpha-aminoacyl-[protein] + tRNA(Phe). Functionally, functions in the N-end rule pathway of protein degradation where it conjugates Leu, Phe and, less efficiently, Met from aminoacyl-tRNAs to the N-termini of proteins containing an N-terminal arginine or lysine. The chain is Leucyl/phenylalanyl-tRNA--protein transferase from Edwardsiella ictaluri (strain 93-146).